The sequence spans 332 residues: Glycerol-3-phosphate dehydrogenase [NAD(P)+] (332 aa).

Residues Trp-13, Arg-33, and Lys-105 each contribute to the NADPH site. Positions 105, 134, and 136 each coordinate sn-glycerol 3-phosphate. Residue Ala-138 coordinates NADPH. Sn-glycerol 3-phosphate contacts are provided by Lys-189, Asp-242, Ser-252, Arg-253, and Asn-254. Lys-189 (proton acceptor) is an active-site residue. Position 253 (Arg-253) interacts with NADPH. NADPH is bound at residue Glu-279.

This sequence belongs to the NAD-dependent glycerol-3-phosphate dehydrogenase family.

It is found in the cytoplasm. It carries out the reaction sn-glycerol 3-phosphate + NAD(+) = dihydroxyacetone phosphate + NADH + H(+). The catalysed reaction is sn-glycerol 3-phosphate + NADP(+) = dihydroxyacetone phosphate + NADPH + H(+). It participates in membrane lipid metabolism; glycerophospholipid metabolism. Catalyzes the reduction of the glycolytic intermediate dihydroxyacetone phosphate (DHAP) to sn-glycerol 3-phosphate (G3P), the key precursor for phospholipid synthesis. In Halorhodospira halophila (strain DSM 244 / SL1) (Ectothiorhodospira halophila (strain DSM 244 / SL1)), this protein is Glycerol-3-phosphate dehydrogenase [NAD(P)+].